Here is a 548-residue protein sequence, read N- to C-terminus: Probable malate:quinone oxidoreductase (548 aa).

Residues 521–548 are disordered; the sequence is DKPQAADSTPKPQLKPKPVQKEVADIAL. Residues 539 to 548 are compositionally biased toward basic and acidic residues; the sequence is VQKEVADIAL.

Belongs to the MQO family. Requires FAD as cofactor.

It catalyses the reaction (S)-malate + a quinone = a quinol + oxaloacetate. Its pathway is carbohydrate metabolism; tricarboxylic acid cycle; oxaloacetate from (S)-malate (quinone route): step 1/1. This chain is Probable malate:quinone oxidoreductase, found in Escherichia coli (strain ATCC 8739 / DSM 1576 / NBRC 3972 / NCIMB 8545 / WDCM 00012 / Crooks).